Here is a 121-residue protein sequence, read N- to C-terminus: MADLNSPIQYLKDDFKDQTSIGSLEYDENSDTMIPSFAAGLENYEPIPSPTTSSSLYSHLTHNMEKIAEEDDINFLHDTREFTSLVPDEADNKPEDDEESGGAKPKKKKHLFPKLSSHKSK.

At A2 the chain carries N-acetylalanine; by host. Positions 84–121 are disordered; sequence SLVPDEADNKPEDDEESGGAKPKKKKHLFPKLSSHKSK. The span at 104 to 121 shows a compositional bias: basic residues; that stretch reads KPKKKKHLFPKLSSHKSK.

Belongs to the asfivirus structural protein p14.5 family. Interacts with the major capsid protein. Interacts with host IRF3; this interaction interferes with the recruitment of IRF3 to TBK1. Post-translationally, acetylated.

It localises to the virion. Functionally, structural protein required for transport of intracellular particles from the assembly sites to the plasma membrane. Binds to both ssDNA and dsDNA. Suppressed the activation of the cGAS/STING pathway by interfering with the recruitment of IRF3 to TBK1, which in turn suppresses IRF3 phosphorylation, decreasing interferon production. The polypeptide is Protein p14.5 (African swine fever virus (isolate Pig/Kenya/KEN-50/1950) (ASFV)).